A 144-amino-acid chain; its full sequence is Deoxyuridine 5'-triphosphate nucleotidohydrolase (144 aa).

Residues 63–65, asparagine 76, and 80–82 contribute to the substrate site; these read RSG and TID.

It belongs to the dUTPase family. The cofactor is Mg(2+).

It catalyses the reaction dUTP + H2O = dUMP + diphosphate + H(+). It participates in pyrimidine metabolism; dUMP biosynthesis; dUMP from dCTP (dUTP route): step 2/2. Functionally, this enzyme is involved in nucleotide metabolism: it produces dUMP, the immediate precursor of thymidine nucleotides and it decreases the intracellular concentration of dUTP so that uracil cannot be incorporated into DNA. This chain is Deoxyuridine 5'-triphosphate nucleotidohydrolase, found in Porphyromonas gingivalis (strain ATCC BAA-308 / W83).